A 240-amino-acid polypeptide reads, in one-letter code: EF-hand domain-containing protein D1 (240 aa).

The disordered stretch occupies residues 17-54 (EVRAETDQGDPQPAPCDAPAGHPEPEPPARAPTASADS). EF-hand domains follow at residues 91-126 (RLLKDLEKMFKTYDAGRDGFIDLMELKLMMEKLGAP) and 127-162 (QTHLGLKSMIKEVDEDFDGKLSFREFLLIFHKAAAG). Ca(2+) is bound by residues Asp-104, Asp-108, Glu-115, Asp-140, Asp-142, Asp-144, Lys-146, and Glu-151.

Widely expressed. Highest expression in testis, followed by ovary, kidney, cerebrum, cerebellum, heart, liver, and spleen. In the cerebrum and cerebellum, undetectable at embryonic stages, expression increases after birth up to adult stage. In adult CNS, detected in neurons of the cerebellum, cerebrum and hippocampus formation, including dentate gyrus and Cornu Ammonis, but not in the white matter. In the testis, expressed in spermatocytes, but not in spermatogonia nor in interstitial cells. In ovary, found predominantly in mural granulosa cells and those of the cumulus oophorus. In kidney, expressed in collecting ducts, but not in glomeruli. Not detected in skeletal muscle.

The protein localises to the mitochondrion inner membrane. Functionally, acts as a calcium sensor for mitochondrial flash (mitoflash) activation, an event characterized by stochastic bursts of superoxide production. May play a role in neuronal differentiation. The chain is EF-hand domain-containing protein D1 (Efhd1) from Mus musculus (Mouse).